The primary structure comprises 324 residues: DNA-directed RNA polymerase subunit alpha (324 aa).

Residues Met-1–Ser-228 form an alpha N-terminal domain (alpha-NTD) region. An alpha C-terminal domain (alpha-CTD) region spans residues Arg-245–Lys-324.

The protein belongs to the RNA polymerase alpha chain family. In terms of assembly, homodimer. The RNAP catalytic core consists of 2 alpha, 1 beta, 1 beta' and 1 omega subunit. When a sigma factor is associated with the core the holoenzyme is formed, which can initiate transcription.

It catalyses the reaction RNA(n) + a ribonucleoside 5'-triphosphate = RNA(n+1) + diphosphate. DNA-dependent RNA polymerase catalyzes the transcription of DNA into RNA using the four ribonucleoside triphosphates as substrates. The chain is DNA-directed RNA polymerase subunit alpha from Caldicellulosiruptor saccharolyticus (strain ATCC 43494 / DSM 8903 / Tp8T 6331).